The primary structure comprises 206 residues: Outer-membrane lipoprotein carrier protein (206 aa).

The signal sequence occupies residues 1–20 (MFYLIKKLPKFILFSLYLYA).

This sequence belongs to the LolA family. In terms of assembly, monomer.

Its subcellular location is the periplasm. Participates in the translocation of lipoproteins from the inner membrane to the outer membrane. Only forms a complex with a lipoprotein if the residue after the N-terminal Cys is not an aspartate (The Asp acts as a targeting signal to indicate that the lipoprotein should stay in the inner membrane). The protein is Outer-membrane lipoprotein carrier protein of Wigglesworthia glossinidia brevipalpis.